A 123-amino-acid chain; its full sequence is Urotensin-2 (123 aa).

An N-terminal signal peptide occupies residues 1–20 (MDRVPFCCLLFVGLLNPLLS). A propeptide spanning residues 21–104 (FPVTDTGEMS…TVLSRLLART (84 aa)) is cleaved from the precursor. The interval 63–91 (EAEGSLGQADPSAETPTPRGSLRKALTGQ) is disordered. Cys117 and Cys122 are oxidised to a cystine.

It belongs to the urotensin-2 family. Brain specific.

The protein localises to the secreted. Its function is as follows. Highly potent vasoconstrictor. The protein is Urotensin-2 (Uts2) of Rattus norvegicus (Rat).